A 377-amino-acid polypeptide reads, in one-letter code: DNA methyltransferase CcrM (377 aa).

One can recognise an RAMA domain in the interval 271–373; the sequence is LGKAELTVMT…LRKIIREQMA (103 aa).

The protein belongs to the N(4)/N(6)-methyltransferase family.

It carries out the reaction a 2'-deoxyadenosine in DNA + S-adenosyl-L-methionine = an N(6)-methyl-2'-deoxyadenosine in DNA + S-adenosyl-L-homocysteine + H(+). Functionally, a beta subtype methylase that recognizes the double-stranded sequence 5'-GANTC-3' and methylates on A-2 on both strands. Overexpression from a moderate-copy number plasmid (10-12 copies/cell) leads to enlarged, branched cells, many with 3-5 genome equivalents. Contributes to the accurate cell-cycle control of DNA replication and cellular morphology. The sequence is that of DNA methyltransferase CcrM from Brucella abortus (strain 2308).